We begin with the raw amino-acid sequence, 274 residues long: Triosephosphate isomerase (274 aa).

N31 to K33 serves as a coordination point for substrate. The active-site Electrophile is the H118. E188 (proton acceptor) is an active-site residue. Substrate contacts are provided by residues G194, S234, and G255–G256.

The protein belongs to the triosephosphate isomerase family. Homodimer.

The protein localises to the cytoplasm. It catalyses the reaction D-glyceraldehyde 3-phosphate = dihydroxyacetone phosphate. Its pathway is carbohydrate biosynthesis; gluconeogenesis. It functions in the pathway carbohydrate degradation; glycolysis; D-glyceraldehyde 3-phosphate from glycerone phosphate: step 1/1. Its function is as follows. Involved in the gluconeogenesis. Catalyzes stereospecifically the conversion of dihydroxyacetone phosphate (DHAP) to D-glyceraldehyde-3-phosphate (G3P). This Chlamydia trachomatis serovar D (strain ATCC VR-885 / DSM 19411 / UW-3/Cx) protein is Triosephosphate isomerase.